A 148-amino-acid chain; its full sequence is Transcription antitermination protein NusB (148 aa).

Belongs to the NusB family.

In terms of biological role, involved in transcription antitermination. Required for transcription of ribosomal RNA (rRNA) genes. Binds specifically to the boxA antiterminator sequence of the ribosomal RNA (rrn) operons. This is Transcription antitermination protein NusB from Nitrosococcus oceani (strain ATCC 19707 / BCRC 17464 / JCM 30415 / NCIMB 11848 / C-107).